Consider the following 293-residue polypeptide: 4-hydroxy-tetrahydrodipicolinate synthase (293 aa).

T51 is a binding site for pyruvate. Y140 (proton donor/acceptor) is an active-site residue. K168 serves as the catalytic Schiff-base intermediate with substrate. I209 provides a ligand contact to pyruvate.

Belongs to the DapA family. Homotetramer; dimer of dimers.

The protein resides in the cytoplasm. The catalysed reaction is L-aspartate 4-semialdehyde + pyruvate = (2S,4S)-4-hydroxy-2,3,4,5-tetrahydrodipicolinate + H2O + H(+). It functions in the pathway amino-acid biosynthesis; L-lysine biosynthesis via DAP pathway; (S)-tetrahydrodipicolinate from L-aspartate: step 3/4. Its function is as follows. Catalyzes the condensation of (S)-aspartate-beta-semialdehyde [(S)-ASA] and pyruvate to 4-hydroxy-tetrahydrodipicolinate (HTPA). The sequence is that of 4-hydroxy-tetrahydrodipicolinate synthase from Streptococcus mutans serotype c (strain ATCC 700610 / UA159).